Reading from the N-terminus, the 380-residue chain is Cytochrome b (380 aa).

The next 4 membrane-spanning stretches (helical) occupy residues phenylalanine 33 to methionine 53, tryptophan 77 to valine 98, tryptophan 113 to leucine 133, and phenylalanine 178 to leucine 198. 2 residues coordinate heme b: histidine 83 and histidine 97. Residues histidine 182 and histidine 196 each contribute to the heme b site. Histidine 201 contacts a ubiquinone. Transmembrane regions (helical) follow at residues isoleucine 226–phenylalanine 246, leucine 288–asparagine 308, isoleucine 320–glycine 340, and phenylalanine 347–proline 367.

This sequence belongs to the cytochrome b family. In terms of assembly, the cytochrome bc1 complex contains 11 subunits: 3 respiratory subunits (MT-CYB, CYC1 and UQCRFS1), 2 core proteins (UQCRC1 and UQCRC2) and 6 low-molecular weight proteins (UQCRH/QCR6, UQCRB/QCR7, UQCRQ/QCR8, UQCR10/QCR9, UQCR11/QCR10 and a cleavage product of UQCRFS1). This cytochrome bc1 complex then forms a dimer. Heme b is required as a cofactor.

The protein localises to the mitochondrion inner membrane. In terms of biological role, component of the ubiquinol-cytochrome c reductase complex (complex III or cytochrome b-c1 complex) that is part of the mitochondrial respiratory chain. The b-c1 complex mediates electron transfer from ubiquinol to cytochrome c. Contributes to the generation of a proton gradient across the mitochondrial membrane that is then used for ATP synthesis. This chain is Cytochrome b (MT-CYB), found in Microryzomys minutus (Forest small rice rat).